We begin with the raw amino-acid sequence, 303 residues long: Elongation factor Ts (303 aa).

The tract at residues 80–83 (TDFV) is involved in Mg(2+) ion dislocation from EF-Tu.

Belongs to the EF-Ts family.

Its subcellular location is the cytoplasm. Associates with the EF-Tu.GDP complex and induces the exchange of GDP to GTP. It remains bound to the aminoacyl-tRNA.EF-Tu.GTP complex up to the GTP hydrolysis stage on the ribosome. This is Elongation factor Ts from Clostridium botulinum (strain Alaska E43 / Type E3).